Consider the following 247-residue polypeptide: Cell division protein ZapD (247 aa).

This sequence belongs to the ZapD family. Interacts with FtsZ.

It is found in the cytoplasm. Its function is as follows. Cell division factor that enhances FtsZ-ring assembly. Directly interacts with FtsZ and promotes bundling of FtsZ protofilaments, with a reduction in FtsZ GTPase activity. The sequence is that of Cell division protein ZapD from Escherichia coli O157:H7.